Consider the following 370-residue polypeptide: Spermidine/putrescine import ATP-binding protein PotA (370 aa).

Residues 11-241 form the ABC transporter domain; that stretch reads IELRSITKSY…PKNLFVAKFI (231 aa). 43–50 contributes to the ATP binding site; sequence GPSGCGKT.

Belongs to the ABC transporter superfamily. Spermidine/putrescine importer (TC 3.A.1.11.1) family. As to quaternary structure, the complex is composed of two ATP-binding proteins (PotA), two transmembrane proteins (PotB and PotC) and a solute-binding protein (PotD).

It is found in the cell inner membrane. It carries out the reaction ATP + H2O + polyamine-[polyamine-binding protein]Side 1 = ADP + phosphate + polyamineSide 2 + [polyamine-binding protein]Side 1.. Its function is as follows. Part of the ABC transporter complex PotABCD involved in spermidine/putrescine import. Responsible for energy coupling to the transport system. The polypeptide is Spermidine/putrescine import ATP-binding protein PotA (Pasteurella multocida (strain Pm70)).